We begin with the raw amino-acid sequence, 74 residues long: MMSKLGVLLTVCLLLFPLTALPLDGDQPADQLEDRMQDDISSEQYPSFVRRQKCCGEGSSCPKYFKNNFICGCC.

The first 20 residues, 1-20 (MMSKLGVLLTVCLLLFPLTA), serve as a signal peptide directing secretion. A propeptide spanning residues 21–53 (LPLDGDQPADQLEDRMQDDISSEQYPSFVRRQK) is cleaved from the precursor. 3 cysteine pairs are disulfide-bonded: C54/C71, C55/C73, and C61/C74.

It belongs to the conotoxin M superfamily. Post-translationally, three disulfide isomers have been synthesized and tested. SIIID with the disulfide pairing 1-4;2-5;3-6 is the most active. As to expression, expressed by the venom duct.

Its subcellular location is the secreted. In terms of biological role, the short synthetic peptide SIIID (range 54-74, with disulfide pairing 1-4, 2-5 and 3-6) reversibly inhibits human alpha-7/CHRNA7 acetylcholine receptor (IC(50)=880 nM). Shows a paralytic effect in fish. The sequence is that of Conotoxin SIIID from Conus striatus (Striated cone).